We begin with the raw amino-acid sequence, 283 residues long: Undecaprenyl-diphosphatase (283 aa).

Transmembrane regions (helical) follow at residues 4–24, 45–65, 91–111, 118–138, 153–173, 194–214, 228–248, and 258–278; these read LLIL…FLPI, ADLF…YEYW, QLGL…FTLA, LFNP…IFYV, VSLK…IPGT, AEFS…LDLL, ILGV…RWLV, and IFAW…WIFG.

It belongs to the UppP family.

Its subcellular location is the cell inner membrane. It catalyses the reaction di-trans,octa-cis-undecaprenyl diphosphate + H2O = di-trans,octa-cis-undecaprenyl phosphate + phosphate + H(+). Its function is as follows. Catalyzes the dephosphorylation of undecaprenyl diphosphate (UPP). Confers resistance to bacitracin. The polypeptide is Undecaprenyl-diphosphatase (Psychrobacter sp. (strain PRwf-1)).